A 100-amino-acid chain; its full sequence is MTLTKAELADLLFEKVGLNKREAKDMVEAFFEEIRNALEVGDGVKLSGFGNFQLRDKPQRPGRNPKTGQEIPITARRVVTFHASQKLKSDVELAFDGTAA.

The protein belongs to the bacterial histone-like protein family. Heterodimer of an alpha and a beta chain.

Its function is as follows. This protein is one of the two subunits of integration host factor, a specific DNA-binding protein that functions in genetic recombination as well as in transcriptional and translational control. The chain is Integration host factor subunit alpha 2 from Dechloromonas aromatica (strain RCB).